The sequence spans 83 residues: Neurotoxin 3FTx-RI (83 aa).

An N-terminal signal peptide occupies residues 1-21; the sequence is MKTLLLTLVVLTIVCLDLGHT. 4 disulfide bridges follow: C24–C45, C38–C62, C64–C75, and C76–C81.

It belongs to the three-finger toxin family. Short-chain subfamily. Type I alpha-neurotoxin sub-subfamily. In terms of tissue distribution, expressed by the venom gland.

Its subcellular location is the secreted. In terms of biological role, binds to muscle nicotinic acetylcholine receptor (nAChR) and inhibit acetylcholine from binding to the receptor, thereby impairing neuromuscular transmission. This chain is Neurotoxin 3FTx-RI, found in Bungarus fasciatus (Banded krait).